Reading from the N-terminus, the 397-residue chain is Chorismate synthase (397 aa).

2 residues coordinate NADP(+): R40 and R46. Residues 129–131 (RSS), 257–258 (QA), G302, 317–321 (KPISS), and R343 contribute to the FMN site.

It belongs to the chorismate synthase family. In terms of assembly, homotetramer. Requires FMNH2 as cofactor.

It catalyses the reaction 5-O-(1-carboxyvinyl)-3-phosphoshikimate = chorismate + phosphate. The protein operates within metabolic intermediate biosynthesis; chorismate biosynthesis; chorismate from D-erythrose 4-phosphate and phosphoenolpyruvate: step 7/7. In terms of biological role, catalyzes the anti-1,4-elimination of the C-3 phosphate and the C-6 proR hydrogen from 5-enolpyruvylshikimate-3-phosphate (EPSP) to yield chorismate, which is the branch point compound that serves as the starting substrate for the three terminal pathways of aromatic amino acid biosynthesis. This reaction introduces a second double bond into the aromatic ring system. This chain is Chorismate synthase, found in Pelodictyon phaeoclathratiforme (strain DSM 5477 / BU-1).